Consider the following 239-residue polypeptide: Peptidyl-tRNA hydrolase (239 aa).

Tyr-14 is a tRNA binding site. His-19 serves as the catalytic Proton acceptor. Residues Phe-64, Asn-66, and Asn-112 each contribute to the tRNA site. Residues 188-239 form a disordered region; that stretch reads APPRSSTSKPKAQDNREDAAQAAEERSETRTPPEARPEDTRSALQKLADKFR. The segment covering 198–239 has biased composition (basic and acidic residues); it reads KAQDNREDAAQAAEERSETRTPPEARPEDTRSALQKLADKFR.

The protein belongs to the PTH family. In terms of assembly, monomer.

It localises to the cytoplasm. It catalyses the reaction an N-acyl-L-alpha-aminoacyl-tRNA + H2O = an N-acyl-L-amino acid + a tRNA + H(+). Functionally, hydrolyzes ribosome-free peptidyl-tRNAs (with 1 or more amino acids incorporated), which drop off the ribosome during protein synthesis, or as a result of ribosome stalling. In terms of biological role, catalyzes the release of premature peptidyl moieties from peptidyl-tRNA molecules trapped in stalled 50S ribosomal subunits, and thus maintains levels of free tRNAs and 50S ribosomes. The sequence is that of Peptidyl-tRNA hydrolase from Jannaschia sp. (strain CCS1).